We begin with the raw amino-acid sequence, 100 residues long: Urease subunit gamma (100 aa).

The protein belongs to the urease gamma subunit family. As to quaternary structure, heterotrimer of UreA (gamma), UreB (beta) and UreC (alpha) subunits. Three heterotrimers associate to form the active enzyme.

The protein localises to the cytoplasm. The enzyme catalyses urea + 2 H2O + H(+) = hydrogencarbonate + 2 NH4(+). The protein operates within nitrogen metabolism; urea degradation; CO(2) and NH(3) from urea (urease route): step 1/1. The sequence is that of Urease subunit gamma from Lysinibacillus sphaericus (strain C3-41).